The sequence spans 550 residues: Hydroxylamine reductase (550 aa).

[2Fe-2S] cluster contacts are provided by Cys-3, Cys-6, Cys-18, and Cys-25. Positions 249, 273, 317, 405, 433, 458, 492, and 494 each coordinate hybrid [4Fe-2O-2S] cluster. Position 405 is a cysteine persulfide (Cys-405).

This sequence belongs to the HCP family. The cofactor is [2Fe-2S] cluster. Hybrid [4Fe-2O-2S] cluster serves as cofactor.

Its subcellular location is the cytoplasm. It catalyses the reaction A + NH4(+) + H2O = hydroxylamine + AH2 + H(+). Functionally, catalyzes the reduction of hydroxylamine to form NH(3) and H(2)O. The chain is Hydroxylamine reductase from Escherichia fergusonii (strain ATCC 35469 / DSM 13698 / CCUG 18766 / IAM 14443 / JCM 21226 / LMG 7866 / NBRC 102419 / NCTC 12128 / CDC 0568-73).